A 91-amino-acid chain; its full sequence is Small ribosomal subunit protein uS15 (91 aa).

Belongs to the universal ribosomal protein uS15 family. Part of the 30S ribosomal subunit. Forms a bridge to the 50S subunit in the 70S ribosome, contacting the 23S rRNA.

Its function is as follows. One of the primary rRNA binding proteins, it binds directly to 16S rRNA where it helps nucleate assembly of the platform of the 30S subunit by binding and bridging several RNA helices of the 16S rRNA. Functionally, forms an intersubunit bridge (bridge B4) with the 23S rRNA of the 50S subunit in the ribosome. This Nautilia profundicola (strain ATCC BAA-1463 / DSM 18972 / AmH) protein is Small ribosomal subunit protein uS15.